The sequence spans 591 residues: Metalloendopeptidase OPG085 (591 aa).

His41 contacts Zn(2+). The active site involves Glu44. His45 and Glu112 together coordinate Zn(2+).

The protein belongs to the peptidase M44 family. Requires Zn(2+) as cofactor. Post-translationally, undergoes proteolytic processing during the course of infection. May be cleaved into 46 kDa and 22 kDa products (Potential).

The protein localises to the virion. Its function is as follows. Probably involved in maturation of some viral proteins by processing them preferentially at Ala-Gly-|-Ser/Thr/Lys motifs. Does not seem to be responsible for the cleavage of major core proteins. The protein is Metalloendopeptidase OPG085 (OPG085) of Monkeypox virus.